The following is a 496-amino-acid chain: MEKSQGYLELDKSWRHDFLYPLIFQEYIYALAHEQGLNRSILLENTDHDNKYSSLIVKRLITLIHQQNHFLIFDNDSNQNPFWKHNNNLYSQTISEGFVIIVEIPFSPRFVDSLEEKKKILKSNNLRSIHSIFPFLEDQILHLNFVANILIPYPIHLEIVVQSLRYRVKDASSLHLLRFFLFTLNKSISSFSKRNQRFFLFLYNSHVYEYESTFLFLRNKTSHLRSTSSGAFLERIFFYGKIKHLIEVFANDFQAILWLFKDPFMHYVRYQGKSILASKRTSLRMNKWKYYLVNFWQCQFYVWSQPGRVSINQLSNHSLDFLGYLSSVRRNPLAVRSQMLENSFLTDNAIKKFDIIVLLISLIGSLAKAKFCNVLGHPLSKPARADSSDSDIIERFVRICRNLSHYHSGSSKKKSLYRIKYILRLSCARTLARKHKTTVRSFLKRLGSELLEEFLTEDGQVISLIFPRTSSTSWRLYRGGIWYLDITCINDLANHE.

This sequence belongs to the intron maturase 2 family. MatK subfamily.

It localises to the plastid. Its subcellular location is the chloroplast. Usually encoded in the trnK tRNA gene intron. Probably assists in splicing its own and other chloroplast group II introns. The sequence is that of Maturase K from Paeonia peregrina (Common peony).